The primary structure comprises 787 residues: ATP-dependent zinc metalloprotease FtsH (787 aa).

Over Met1 to Asn5 the chain is Cytoplasmic. A helical membrane pass occupies residues Val6–Phe26. Over Ser27–Ser110 the chain is Extracellular. The chain crosses the membrane as a helical span at residues Ile111–Met131. Over Phe132–Gly787 the chain is Cytoplasmic. Gly203–Thr210 provides a ligand contact to ATP. A Zn(2+)-binding site is contributed by His425. Residue Glu426 is part of the active site. Zn(2+)-binding residues include His429 and Asp501. Residues Asp616 to Gly787 form a disordered region. Composition is skewed to low complexity over residues Ala650–Ser671 and Tyr700–Pro709. Over residues Gly710–Trp720 the composition is skewed to pro residues. A compositionally biased stretch (low complexity) spans Tyr721–Tyr732. Pro residues predominate over residues Trp733 to Gln762.

The protein in the central section; belongs to the AAA ATPase family. This sequence in the C-terminal section; belongs to the peptidase M41 family. Homohexamer. The cofactor is Zn(2+).

The protein resides in the cell membrane. Its function is as follows. Acts as a processive, ATP-dependent zinc metallopeptidase for both cytoplasmic and membrane proteins. Plays a role in the quality control of integral membrane proteins. This Mycobacterium leprae (strain TN) protein is ATP-dependent zinc metalloprotease FtsH.